The primary structure comprises 114 residues: Phosphoribosyl-AMP cyclohydrolase (114 aa).

Asp-76 lines the Mg(2+) pocket. Cys-77 lines the Zn(2+) pocket. Asp-78 and Asp-80 together coordinate Mg(2+). Zn(2+)-binding residues include Cys-93 and Cys-100.

Belongs to the PRA-CH family. As to quaternary structure, homodimer. Mg(2+) is required as a cofactor. Zn(2+) serves as cofactor.

Its subcellular location is the cytoplasm. It carries out the reaction 1-(5-phospho-beta-D-ribosyl)-5'-AMP + H2O = 1-(5-phospho-beta-D-ribosyl)-5-[(5-phospho-beta-D-ribosylamino)methylideneamino]imidazole-4-carboxamide. Its pathway is amino-acid biosynthesis; L-histidine biosynthesis; L-histidine from 5-phospho-alpha-D-ribose 1-diphosphate: step 3/9. In terms of biological role, catalyzes the hydrolysis of the adenine ring of phosphoribosyl-AMP. This Streptococcus gordonii (strain Challis / ATCC 35105 / BCRC 15272 / CH1 / DL1 / V288) protein is Phosphoribosyl-AMP cyclohydrolase.